The chain runs to 748 residues: SNF-related serine/threonine-protein kinase (748 aa).

Residues 16–269 (YDLDKTLGRG…LEEIESHPWL (254 aa)) enclose the Protein kinase domain. Residues 22–30 (LGRGHFAVV) and lysine 45 each bind ATP. The active-site Proton acceptor is aspartate 139. Phosphoserine is present on serine 162. A Phosphothreonine; by LKB1 modification is found at threonine 173. Positions 291–334 (SEEEHNSIIQRMVLGDIADRDAIVEALETNRYNHITATYFLLAE) constitute a UBA domain. Serine 362, serine 390, serine 482, serine 495, and serine 518 each carry phosphoserine. Positions 383-415 (SHATVPQSPARAGDNVLNGHRSKGLCDPAKKDE) are disordered. Positions 491-503 (EEGESDDEFDMDE) are enriched in acidic residues. The segment at 491–640 (EEGESDDEFD…SPSPASASAA (150 aa)) is disordered. The span at 522-532 (VHKRYHRRKSQ) shows a compositional bias: basic residues. Positions 533–542 (GRGSSCSSSE) are enriched in low complexity. Arginine 534 carries the omega-N-methylarginine modification. The segment covering 549-558 (ESRRRLDKDS) has biased composition (basic and acidic residues). 2 stretches are compositionally biased toward gly residues: residues 575-592 (GSEG…GGGV) and 600-614 (QGTG…GGTP). Serine 606 is modified (phosphoserine). Low complexity predominate over residues 629–640 (SSSPSPASASAA).

Belongs to the protein kinase superfamily. CAMK Ser/Thr protein kinase family. It depends on Mg(2+) as a cofactor. Post-translationally, autophosphorylated. Phosphorylation on Thr-173 by STK11/LKB1 in complex with STE20-related adapter-alpha (STRADA) pseudo kinase and CAB39. As to expression, ubiquitously expressed in all tissues examined.

It is found in the nucleus. The enzyme catalyses L-seryl-[protein] + ATP = O-phospho-L-seryl-[protein] + ADP + H(+). It carries out the reaction L-threonyl-[protein] + ATP = O-phospho-L-threonyl-[protein] + ADP + H(+). Its activity is regulated as follows. Activated by phosphorylation on Thr-173. Its function is as follows. May play a role in hematopoietic cell proliferation or differentiation. Potential mediator of neuronal apoptosis. The polypeptide is SNF-related serine/threonine-protein kinase (Mus musculus (Mouse)).